The primary structure comprises 227 residues: MAYPFQLGLQDATSPIMEELLHFHDHTLMIVFLISSLVLYIITLMLTTKLTHTSTMDAQEVETVWTILPAIILILIALPSLRILYMMDEINNPSLTVKTMGHQWYWSYEYTDYEDLNFDSYMIPTQELKPGELRLLEVDNRVVLPMEMTVRMLISSEDVLHSWAVPSLGLKTDAIPGRLNQTTLMAMRPGLYYGQCSEICGSNHSFMPIVLEMVPLSYFETWSALMV.

Residues 1–14 (MAYPFQLGLQDATS) lie on the Mitochondrial intermembrane side of the membrane. A helical transmembrane segment spans residues 15–45 (PIMEELLHFHDHTLMIVFLISSLVLYIITLM). Over 46–59 (LTTKLTHTSTMDAQ) the chain is Mitochondrial matrix. The chain crosses the membrane as a helical span at residues 60 to 87 (EVETVWTILPAIILILIALPSLRILYMM). Over 88 to 227 (DEINNPSLTV…YFETWSALMV (140 aa)) the chain is Mitochondrial intermembrane. 6 residues coordinate Cu cation: His161, Cys196, Glu198, Cys200, His204, and Met207. Residue Glu198 coordinates Mg(2+). Tyr218 carries the phosphotyrosine modification.

The protein belongs to the cytochrome c oxidase subunit 2 family. Component of the cytochrome c oxidase (complex IV, CIV), a multisubunit enzyme composed of 14 subunits. The complex is composed of a catalytic core of 3 subunits MT-CO1, MT-CO2 and MT-CO3, encoded in the mitochondrial DNA, and 11 supernumerary subunits COX4I, COX5A, COX5B, COX6A, COX6B, COX6C, COX7A, COX7B, COX7C, COX8 and NDUFA4, which are encoded in the nuclear genome. The complex exists as a monomer or a dimer and forms supercomplexes (SCs) in the inner mitochondrial membrane with NADH-ubiquinone oxidoreductase (complex I, CI) and ubiquinol-cytochrome c oxidoreductase (cytochrome b-c1 complex, complex III, CIII), resulting in different assemblies (supercomplex SCI(1)III(2)IV(1) and megacomplex MCI(2)III(2)IV(2)). Found in a complex with TMEM177, COA6, COX18, COX20, SCO1 and SCO2. Interacts with TMEM177 in a COX20-dependent manner. Interacts with COX20. Interacts with COX16. Cu cation is required as a cofactor.

It localises to the mitochondrion inner membrane. The catalysed reaction is 4 Fe(II)-[cytochrome c] + O2 + 8 H(+)(in) = 4 Fe(III)-[cytochrome c] + 2 H2O + 4 H(+)(out). Its function is as follows. Component of the cytochrome c oxidase, the last enzyme in the mitochondrial electron transport chain which drives oxidative phosphorylation. The respiratory chain contains 3 multisubunit complexes succinate dehydrogenase (complex II, CII), ubiquinol-cytochrome c oxidoreductase (cytochrome b-c1 complex, complex III, CIII) and cytochrome c oxidase (complex IV, CIV), that cooperate to transfer electrons derived from NADH and succinate to molecular oxygen, creating an electrochemical gradient over the inner membrane that drives transmembrane transport and the ATP synthase. Cytochrome c oxidase is the component of the respiratory chain that catalyzes the reduction of oxygen to water. Electrons originating from reduced cytochrome c in the intermembrane space (IMS) are transferred via the dinuclear copper A center (CU(A)) of subunit 2 and heme A of subunit 1 to the active site in subunit 1, a binuclear center (BNC) formed by heme A3 and copper B (CU(B)). The BNC reduces molecular oxygen to 2 water molecules using 4 electrons from cytochrome c in the IMS and 4 protons from the mitochondrial matrix. The chain is Cytochrome c oxidase subunit 2 (MT-CO2) from Vulpes macrotis (Kit fox).